Reading from the N-terminus, the 51-residue chain is MRDKIKLVSSAGTGHFYTTTKNKRTMPEKMEIKKFDPVVRKHVLYKEAKIK.

Belongs to the bacterial ribosomal protein bL33 family.

This is Large ribosomal subunit protein bL33 from Methylococcus capsulatus (strain ATCC 33009 / NCIMB 11132 / Bath).